The chain runs to 416 residues: Gamma-glutamyl phosphate reductase (416 aa).

The protein belongs to the gamma-glutamyl phosphate reductase family.

The protein resides in the cytoplasm. It carries out the reaction L-glutamate 5-semialdehyde + phosphate + NADP(+) = L-glutamyl 5-phosphate + NADPH + H(+). It participates in amino-acid biosynthesis; L-proline biosynthesis; L-glutamate 5-semialdehyde from L-glutamate: step 2/2. Its function is as follows. Catalyzes the NADPH-dependent reduction of L-glutamate 5-phosphate into L-glutamate 5-semialdehyde and phosphate. The product spontaneously undergoes cyclization to form 1-pyrroline-5-carboxylate. The protein is Gamma-glutamyl phosphate reductase of Streptococcus thermophilus (strain CNRZ 1066).